Consider the following 558-residue polypeptide: Undecaprenyl phosphate-alpha-4-amino-4-deoxy-L-arabinose arabinosyl transferase 1 (558 aa).

12 helical membrane passes run 4 to 24 (GAGL…LVPL), 87 to 107 (FASV…SWTV), 115 to 135 (LLAA…TYSV), 136 to 156 (LDPM…FALR), 178 to 198 (FMTK…PVAL), 207 to 227 (LGYG…WALA), 257 to 277 (APFW…LGLL), 295 to 315 (FLLL…KGKL), 316 to 336 (LTYI…YGRE), 355 to 375 (AFAL…LPWA), 383 to 403 (WPRI…AAVS), and 411 to 431 (WALA…IIPQ).

This sequence belongs to the glycosyltransferase 83 family.

The protein resides in the cell inner membrane. It catalyses the reaction 4-amino-4-deoxy-alpha-L-arabinopyranosyl di-trans,octa-cis-undecaprenyl phosphate + lipid IVA = lipid IIA + di-trans,octa-cis-undecaprenyl phosphate.. It participates in lipopolysaccharide metabolism; 4-amino-4-deoxy-beta-L-arabinose-lipid A biosynthesis. In terms of biological role, catalyzes the transfer of the L-Ara4N moiety of the glycolipid undecaprenyl phosphate-alpha-L-Ara4N to lipid A. The modified arabinose is attached to lipid A and is required for resistance to polymyxin and cationic antimicrobial peptides. This is Undecaprenyl phosphate-alpha-4-amino-4-deoxy-L-arabinose arabinosyl transferase 1 from Sodalis glossinidius (strain morsitans).